A 329-amino-acid polypeptide reads, in one-letter code: GTP 3',8-cyclase (329 aa).

In terms of domain architecture, Radical SAM core spans 8 to 234 (AFARKFYYLR…QLRQRSDGPA (227 aa)). R17 contributes to the GTP binding site. The [4Fe-4S] cluster site is built by C24 and C28. Residue Y30 participates in S-adenosyl-L-methionine binding. C31 serves as a coordination point for [4Fe-4S] cluster. Position 68 (R68) interacts with GTP. G72 is an S-adenosyl-L-methionine binding site. Residue T99 participates in GTP binding. Position 123 (S123) interacts with S-adenosyl-L-methionine. Residue K160 coordinates GTP. M194 contacts S-adenosyl-L-methionine. [4Fe-4S] cluster-binding residues include C257 and C260. Residue 262-264 (RLR) coordinates GTP. A [4Fe-4S] cluster-binding site is contributed by C274.

Belongs to the radical SAM superfamily. MoaA family. In terms of assembly, monomer and homodimer. [4Fe-4S] cluster is required as a cofactor.

It catalyses the reaction GTP + AH2 + S-adenosyl-L-methionine = (8S)-3',8-cyclo-7,8-dihydroguanosine 5'-triphosphate + 5'-deoxyadenosine + L-methionine + A + H(+). The protein operates within cofactor biosynthesis; molybdopterin biosynthesis. Catalyzes the cyclization of GTP to (8S)-3',8-cyclo-7,8-dihydroguanosine 5'-triphosphate. The polypeptide is GTP 3',8-cyclase (Escherichia fergusonii (strain ATCC 35469 / DSM 13698 / CCUG 18766 / IAM 14443 / JCM 21226 / LMG 7866 / NBRC 102419 / NCTC 12128 / CDC 0568-73)).